The sequence spans 1172 residues: Thrombospondin-2 (1172 aa).

The signal sequence occupies residues 1–18; that stretch reads MLWALALLALGIGPRASA. The region spanning 19–215 is the Laminin G-like domain; the sequence is GDHVKDTSFD…LQNVHLVFAD (197 aa). A heparin-binding region spans residues 19-232; it reads GDHVKDTSFD…KKGCQHSQGA (214 aa). 3 N-linked (GlcNAc...) asparagine glycosylation sites follow: Asn151, Asn316, and Asn330. Residues 318-375 enclose the VWFC domain; sequence SACVQEGRIFAENETWVVDSCTTCTCKKFKTVCHQITCSPATCANPSFVEGECCPSCS. TSP type-1 domains are found at residues 381–431, 437–492, and 494–549; these read DEGW…GKCD, NGGW…DPCP, and DGRW…RSCP. 27 disulfides stabilise this stretch: Cys393-Cys425, Cys397-Cys430, Cys408-Cys415, Cys449-Cys486, Cys453-Cys491, Cys464-Cys476, Cys506-Cys543, Cys510-Cys548, Cys521-Cys533, Cys553-Cys564, Cys558-Cys574, Cys577-Cys588, Cys594-Cys610, Cys601-Cys619, Cys622-Cys646, Cys652-Cys665, Cys659-Cys678, Cys680-Cys691, Cys707-Cys715, Cys720-Cys740, Cys756-Cys776, Cys779-Cys799, Cys815-Cys835, Cys838-Cys858, Cys876-Cys896, Cys912-Cys932, and Cys948-Cys1169. N-linked (GlcNAc...) asparagine glycosylation is present at Asn457. One can recognise an EGF-like 1 domain in the interval 549 to 589; that stretch reads PIDGCLSNPCFPGAKCNSFPDGSWSCGSCPVGFLGNGTHCE. The N-linked (GlcNAc...) asparagine glycan is linked to Asn584. The region spanning 648–692 is the EGF-like 2 domain; that stretch reads PENPCKDKTHSCHKNAECIYLGHFSDPMYKCECQIGYAGDGLICG. 8 TSP type-3 repeats span residues 693 to 728, 729 to 764, 765 to 787, 788 to 823, 824 to 846, 847 to 884, 885 to 920, and 921 to 956; these read EDSDLDGWPNNNLVCATNATYHCIKDNCPKLPNSGQ, EDFDKDGIGDACDEDDDNDGVSDEKDNCQLLFNPRQ, LDYDKDEVGDRCDNCPYVHNPAQ, IDTDNNGEGDACSVDIDGDDVFNERDNCPYVYNTDQ, RDTDGDGVGDHCDNCPLMHNPDQ, IDQDNDLVGDQCDNNEDIDDDGHQNNQDNCPYISNSNQ, ADHDNDGKGDACDSDDDNDGVPDDRDNCRLVFNPDQ, and EDSDGDGRGDICKDDFDNDNVPDIDDVCPENNAITE. The N-linked (GlcNAc...) asparagine glycan is linked to Asn710. Residues 727–752 are disordered; that stretch reads GQEDFDKDGIGDACDEDDDNDGVSDE. Acidic residues predominate over residues 739–749; sequence ACDEDDDNDGV. The tract at residues 846 to 938 is disordered; sequence QIDQDNDLVG…GDICKDDFDN (93 aa). The segment covering 847–866 has biased composition (acidic residues); sequence IDQDNDLVGDQCDNNEDIDD. Residues 870 to 884 show a composition bias toward polar residues; the sequence is QNNQDNCPYISNSNQ. Basic and acidic residues predominate over residues 885–895; that stretch reads ADHDNDGKGDA. Acidic residues predominate over residues 896 to 905; the sequence is CDSDDDNDGV. The segment covering 925–935 has biased composition (basic and acidic residues); it reads GDGRGDICKDD. Residues 928–930 carry the Cell attachment site motif; sequence RGD. A TSP C-terminal domain is found at 960–1172; it reads RNFQMVPLDP…SDLKYECRDA (213 aa). Asn1069 is a glycosylation site (N-linked (GlcNAc...) asparagine).

Belongs to the thrombospondin family. In terms of assembly, homotrimer; disulfide-linked. Can bind to fibrinogen, fibronectin, laminin and type V collagen. Interacts (via the TSP type I repeats) with CD36; the interaction conveys an antiangiogenic effect. Interacts (via the TSP type I repeats) with HRG; the interaction blocks the antiangiogenic effect of THBS2 with CD36. Can bind to fibrinogen, fibronectin, laminin.

Adhesive glycoprotein that mediates cell-to-cell and cell-to-matrix interactions. Ligand for CD36 mediating antiangiogenic properties. The polypeptide is Thrombospondin-2 (Thbs2) (Mus musculus (Mouse)).